The following is a 147-amino-acid chain: UPF0251 protein CTC_01373 (147 aa).

Belongs to the UPF0251 family.

The sequence is that of UPF0251 protein CTC_01373 from Clostridium tetani (strain Massachusetts / E88).